We begin with the raw amino-acid sequence, 341 residues long: Ketol-acid reductoisomerase (NADP(+)) (341 aa).

A KARI N-terminal Rossmann domain is found at 1–182 (MTEMFYDDDA…GGTRAGVIKT (182 aa)). Residues 25-28 (YGSQ), Lys-48, Ser-51, Ser-53, and 83-86 (DQHQ) each bind NADP(+). His-108 is a catalytic residue. Gly-134 is an NADP(+) binding site. A KARI C-terminal knotted domain is found at 183–328 (TFTEETETDL…RELRSLFSWQ (146 aa)). 4 residues coordinate Mg(2+): Asp-191, Glu-195, Glu-227, and Glu-231. Ser-252 is a substrate binding site.

The protein belongs to the ketol-acid reductoisomerase family. Requires Mg(2+) as cofactor.

It catalyses the reaction (2R)-2,3-dihydroxy-3-methylbutanoate + NADP(+) = (2S)-2-acetolactate + NADPH + H(+). The enzyme catalyses (2R,3R)-2,3-dihydroxy-3-methylpentanoate + NADP(+) = (S)-2-ethyl-2-hydroxy-3-oxobutanoate + NADPH + H(+). Its pathway is amino-acid biosynthesis; L-isoleucine biosynthesis; L-isoleucine from 2-oxobutanoate: step 2/4. The protein operates within amino-acid biosynthesis; L-valine biosynthesis; L-valine from pyruvate: step 2/4. Involved in the biosynthesis of branched-chain amino acids (BCAA). Catalyzes an alkyl-migration followed by a ketol-acid reduction of (S)-2-acetolactate (S2AL) to yield (R)-2,3-dihydroxy-isovalerate. In the isomerase reaction, S2AL is rearranged via a Mg-dependent methyl migration to produce 3-hydroxy-3-methyl-2-ketobutyrate (HMKB). In the reductase reaction, this 2-ketoacid undergoes a metal-dependent reduction by NADPH to yield (R)-2,3-dihydroxy-isovalerate. The chain is Ketol-acid reductoisomerase (NADP(+)) from Pseudarthrobacter chlorophenolicus (strain ATCC 700700 / DSM 12829 / CIP 107037 / JCM 12360 / KCTC 9906 / NCIMB 13794 / A6) (Arthrobacter chlorophenolicus).